The chain runs to 127 residues: Ribosome-binding factor A (127 aa).

It belongs to the RbfA family. In terms of assembly, monomer. Binds 30S ribosomal subunits, but not 50S ribosomal subunits or 70S ribosomes.

It is found in the cytoplasm. Functionally, one of several proteins that assist in the late maturation steps of the functional core of the 30S ribosomal subunit. Associates with free 30S ribosomal subunits (but not with 30S subunits that are part of 70S ribosomes or polysomes). Required for efficient processing of 16S rRNA. May interact with the 5'-terminal helix region of 16S rRNA. The chain is Ribosome-binding factor A from Aromatoleum aromaticum (strain DSM 19018 / LMG 30748 / EbN1) (Azoarcus sp. (strain EbN1)).